Consider the following 419-residue polypeptide: L-rhamnose isomerase (419 aa).

The Mn(2+) site is built by His-262, Asp-294, and Asp-296.

It belongs to the rhamnose isomerase family. Homotetramer. Requires Mn(2+) as cofactor.

It localises to the cytoplasm. It carries out the reaction L-rhamnopyranose = L-rhamnulose. It functions in the pathway carbohydrate degradation; L-rhamnose degradation; glycerone phosphate from L-rhamnose: step 1/3. Catalyzes the interconversion of L-rhamnose and L-rhamnulose. In Salmonella newport (strain SL254), this protein is L-rhamnose isomerase.